The chain runs to 480 residues: Adenylosuccinate lyase (480 aa).

Arg14, Tyr15, Arg79, His80, and Asp81 together coordinate AMP. Residue His80 participates in fumarate binding. His153 acts as the Proton donor/acceptor in catalysis. Residue Gln236 participates in AMP binding. Gln236 contacts fumarate. Residue Gln236 coordinates N(6)-(1,2-dicarboxyethyl)-AMP. Ser284 (proton donor/acceptor) is an active-site residue. Fumarate contacts are provided by Ser285, Lys290, and Asn292. The N(6)-(1,2-dicarboxyethyl)-AMP site is built by Ser285, Lys290, and Asn292. An AMP-binding site is contributed by Arg298. Positions 324, 329, and 333 each coordinate N(6)-(1,2-dicarboxyethyl)-AMP. Residues Ser329 and Arg333 each contribute to the AMP site.

The protein belongs to the lyase 1 family. Adenylosuccinate lyase subfamily. In terms of assembly, homotetramer.

The catalysed reaction is N(6)-(1,2-dicarboxyethyl)-AMP = fumarate + AMP. It functions in the pathway purine metabolism; AMP biosynthesis via salvage pathway. Functionally, catalyzes conversion of succinyladenosine monophosphate (SAMP) to AMP and fumarate on the purine salvage pathway. The sequence is that of Adenylosuccinate lyase from Schistosoma mansoni (Blood fluke).